A 616-amino-acid polypeptide reads, in one-letter code: Dihydroxy-acid dehydratase (616 aa).

Residue D81 coordinates Mg(2+). C122 provides a ligand contact to [2Fe-2S] cluster. Mg(2+) contacts are provided by D123 and K124. K124 is subject to N6-carboxylysine. [2Fe-2S] cluster is bound at residue C195. E491 lines the Mg(2+) pocket. S517 acts as the Proton acceptor in catalysis.

The protein belongs to the IlvD/Edd family. As to quaternary structure, homodimer. [2Fe-2S] cluster serves as cofactor. Mg(2+) is required as a cofactor.

It carries out the reaction (2R)-2,3-dihydroxy-3-methylbutanoate = 3-methyl-2-oxobutanoate + H2O. The enzyme catalyses (2R,3R)-2,3-dihydroxy-3-methylpentanoate = (S)-3-methyl-2-oxopentanoate + H2O. Its pathway is amino-acid biosynthesis; L-isoleucine biosynthesis; L-isoleucine from 2-oxobutanoate: step 3/4. It participates in amino-acid biosynthesis; L-valine biosynthesis; L-valine from pyruvate: step 3/4. Functions in the biosynthesis of branched-chain amino acids. Catalyzes the dehydration of (2R,3R)-2,3-dihydroxy-3-methylpentanoate (2,3-dihydroxy-3-methylvalerate) into 2-oxo-3-methylpentanoate (2-oxo-3-methylvalerate) and of (2R)-2,3-dihydroxy-3-methylbutanoate (2,3-dihydroxyisovalerate) into 2-oxo-3-methylbutanoate (2-oxoisovalerate), the penultimate precursor to L-isoleucine and L-valine, respectively. The polypeptide is Dihydroxy-acid dehydratase (Shewanella sediminis (strain HAW-EB3)).